Reading from the N-terminus, the 150-residue chain is Phosphoribosyl-AMP cyclohydrolase (150 aa).

Residue aspartate 93 participates in Mg(2+) binding. Position 94 (cysteine 94) interacts with Zn(2+). Residues aspartate 95 and aspartate 97 each coordinate Mg(2+). Cysteine 112 and cysteine 119 together coordinate Zn(2+).

Belongs to the PRA-CH family. In terms of assembly, homodimer. Requires Mg(2+) as cofactor. It depends on Zn(2+) as a cofactor.

The protein localises to the cytoplasm. It carries out the reaction 1-(5-phospho-beta-D-ribosyl)-5'-AMP + H2O = 1-(5-phospho-beta-D-ribosyl)-5-[(5-phospho-beta-D-ribosylamino)methylideneamino]imidazole-4-carboxamide. The protein operates within amino-acid biosynthesis; L-histidine biosynthesis; L-histidine from 5-phospho-alpha-D-ribose 1-diphosphate: step 3/9. In terms of biological role, catalyzes the hydrolysis of the adenine ring of phosphoribosyl-AMP. This chain is Phosphoribosyl-AMP cyclohydrolase, found in Rhizobium etli (strain ATCC 51251 / DSM 11541 / JCM 21823 / NBRC 15573 / CFN 42).